The following is a 118-amino-acid chain: Class II hydrophobin CRP (118 aa).

The first 22 residues, 1 to 22 (MQFSIIAISFLASLAMASPAKR), serve as a signal peptide directing secretion. Positions 20–46 (AKRGGGGGGSGSGSGSGSGSGSGGGST) are disordered. The segment covering 22-45 (RGGGGGGSGSGSGSGSGSGSGGGS) has biased composition (gly residues). 7 repeat units span residues 29-30 (SG), 31-32 (SG), 33-34 (SG), 35-36 (SG), 37-38 (SG), 39-40 (SG), and 41-42 (SG). Positions 29-42 (SGSGSGSGSGSGSG) are 7 X 2 AA tandem repeats of S-G. Intrachain disulfides connect cysteine 51-cysteine 100, cysteine 61-cysteine 91, cysteine 62-cysteine 74, and cysteine 101-cysteine 112.

The protein belongs to the cerato-ulmin hydrophobin family. In terms of assembly, homotetramer. Further self-assembles to form highly ordered films at water-air interfaces through intermolecular interactions.

The protein resides in the secreted. It is found in the cell wall. Aerial growth, conidiation, and dispersal of filamentous fungi in the environment rely upon a capability of their secreting small amphipathic proteins called hydrophobins (HPBs) with low sequence identity. Class I can self-assemble into an outermost layer of rodlet bundles on aerial cell surfaces, conferring cellular hydrophobicity that supports fungal growth, development and dispersal; whereas Class II form highly ordered films at water-air interfaces through intermolecular interactions but contribute nothing to the rodlet structure. Cryparin is a class II hydrophobin that is the most abundant protein produced by this fungus when grown in liquid culture and that plays an essential role in the fitness of this important plant pathogen by facilitating the eruption of the fungal fruiting bodies through the bark of its host tree. The chain is Class II hydrophobin CRP from Cryphonectria parasitica (Chestnut blight fungus).